Reading from the N-terminus, the 238-residue chain is Aspartate/glutamate leucyltransferase (238 aa).

Belongs to the R-transferase family. Bpt subfamily.

It localises to the cytoplasm. The catalysed reaction is N-terminal L-glutamyl-[protein] + L-leucyl-tRNA(Leu) = N-terminal L-leucyl-L-glutamyl-[protein] + tRNA(Leu) + H(+). The enzyme catalyses N-terminal L-aspartyl-[protein] + L-leucyl-tRNA(Leu) = N-terminal L-leucyl-L-aspartyl-[protein] + tRNA(Leu) + H(+). Its function is as follows. Functions in the N-end rule pathway of protein degradation where it conjugates Leu from its aminoacyl-tRNA to the N-termini of proteins containing an N-terminal aspartate or glutamate. This Shewanella sp. (strain MR-4) protein is Aspartate/glutamate leucyltransferase.